The following is a 470-amino-acid chain: 6-phosphofructo-2-kinase/fructose-2,6-bisphosphatase (470 aa).

Positions 1 to 249 (MAAVASGQLT…VYYLMNTHVT (249 aa)) are 6-phosphofructo-2-kinase. Ser-31 carries the phosphoserine; by PKA modification. 47–55 (GLRRPGKTY) is an ATP binding site. 2 residues coordinate beta-D-fructose 6-phosphate: Arg-80 and Arg-104. The active site involves Asp-130. Beta-D-fructose 6-phosphate-binding residues include Thr-132 and Arg-138. Residue Cys-160 is part of the active site. ATP is bound at residue 169-174 (NIKQVK). Beta-D-fructose 6-phosphate is bound by residues Lys-174, Arg-195, and Tyr-199. The tract at residues 250–469 (PRAIYLSRHG…AEALVTVPEH (220 aa)) is fructose-2,6-bisphosphatase. Arg-257 is a beta-D-fructose 2,6-bisphosphate binding site. His-258 serves as the catalytic Tele-phosphohistidine intermediate. Positions 264 and 270 each coordinate beta-D-fructose 2,6-bisphosphate. Glu-327 serves as the catalytic Proton donor/acceptor. Tyr-338, Arg-352, Lys-356, Tyr-367, Gln-393, and Arg-397 together coordinate beta-D-fructose 2,6-bisphosphate. ATP is bound at residue 349-352 (FALR). Residues 393 to 397 (QAVMR) and Tyr-429 each bind ATP.

This sequence in the C-terminal section; belongs to the phosphoglycerate mutase family. As to quaternary structure, homodimer. In terms of tissue distribution, liver.

It catalyses the reaction beta-D-fructose 2,6-bisphosphate + H2O = beta-D-fructose 6-phosphate + phosphate. It carries out the reaction beta-D-fructose 6-phosphate + ATP = beta-D-fructose 2,6-bisphosphate + ADP + H(+). Phosphorylation results in inhibition of the kinase activity. Functionally, synthesis and degradation of fructose 2,6-bisphosphate. In Gallus gallus (Chicken), this protein is 6-phosphofructo-2-kinase/fructose-2,6-bisphosphatase.